The primary structure comprises 401 residues: Golgi membrane protein 1 (401 aa).

Met1 carries the post-translational modification N-acetylmethionine. The Cytoplasmic segment spans residues 1–12; it reads MMGLGNGRRSMK. The helical; Signal-anchor for type II membrane protein transmembrane segment at 13-35 threads the bilayer; sequence SPPLVLAALVACIIVLGFNYWIA. Over 36 to 401 the chain is Lumenal; the sequence is SSRSVDLQTR…DQREKRNHTL (366 aa). Residues 40 to 205 are a coiled coil; sequence VDLQTRIMEL…QRQQLQALSE (166 aa). N-linked (GlcNAc...) (complex) asparagine glycosylation occurs at Asn109. Residue Asn144 is glycosylated (N-linked (GlcNAc...) asparagine). The segment at 178–401 is disordered; sequence TKKGNEAVAS…DQREKRNHTL (224 aa). Ser187 carries the post-translational modification Phosphoserine. The span at 228-238 shows a compositional bias: polar residues; that stretch reads LGNSKSQTPAP. Composition is skewed to basic and acidic residues over residues 244 to 255 and 264 to 285; these read LDSKRQVEKEET and EPQR…DRPV. The segment covering 286 to 295 has biased composition (gly residues); it reads GGRGFGGAGE. The segment covering 298 to 312 has biased composition (polar residues); sequence QTPQVQAALSVSQEN. The residue at position 309 (Ser309) is a Phosphoserine; by FAM20C. Residues 350–360 are compositionally biased toward acidic residues; sequence DYNMDENEAES. The span at 381 to 395 shows a compositional bias: basic and acidic residues; the sequence is EDQKRDTINLLDQRE. A glycan (N-linked (GlcNAc...) asparagine) is linked at Asn398.

It belongs to the GOLM family. In terms of assembly, interacts with DYM. In terms of processing, glycosylated. Post-translationally, phosphorylation sites are present in the extracellular medium. As to expression, widely expressed. Highly expressed in colon, prostate, trachea and stomach. Expressed at lower level in testis, muscle, lymphoid tissues, white blood cells and spleen. Predominantly expressed by cells of the epithelial lineage. Expressed at low level in normal liver. Expression significantly increases in virus (HBV, HCV) infected liver. Expression does not increase in liver disease due to non-viral causes (alcohol-induced liver disease, autoimmune hepatitis). Increased expression in hepatocytes appears to be a general feature of advanced liver disease. In liver tissue from patients with adult giant-cell hepatitis (GCH), it is strongly expressed in hepatocytes-derived syncytial giant cells. Constitutively expressed by biliary epithelial cells but not by hepatocytes.

Its subcellular location is the golgi apparatus. The protein resides in the cis-Golgi network membrane. Unknown. Cellular response protein to viral infection. This Homo sapiens (Human) protein is Golgi membrane protein 1 (GOLM1).